The primary structure comprises 305 residues: Heme A synthase (305 aa).

Over Met1–Lys6 the chain is Cytoplasmic. The chain crosses the membrane as a helical span at residues Val7–Thr27. The Extracellular segment spans residues Lys28–Arg63. Cys35 and Cys42 are oxidised to a cystine. Glu59 is an active-site residue. Residue His62 participates in heme o binding. The helical transmembrane segment at Met64–Met84 threads the bilayer. Residues Lys85–Pro92 are Cytoplasmic-facing. Residues Leu93 to Val113 form a helical membrane-spanning segment. Over Trp114–Ala122 the chain is Extracellular. The helical transmembrane segment at Leu123 to Phe143 threads the bilayer. His124 is a binding site for heme o. Over Glu144–Leu160 the chain is Cytoplasmic. A helical membrane pass occupies residues Arg161 to Val181. The Extracellular segment spans residues Arg182 to Tyr212. The helical transmembrane segment at Phe213–Phe233 threads the bilayer. Position 214 (His214) interacts with heme b. Topologically, residues Arg234–Arg240 are cytoplasmic. Residues Val241 to Ala261 traverse the membrane as a helical segment. The Extracellular segment spans residues Leu262 to Tyr271. Residues Ile272–Leu292 form a helical membrane-spanning segment. His276 provides a ligand contact to heme b. At Leu293 to Lys305 the chain is on the cytoplasmic side.

Belongs to the COX15/CtaA family. Type 1 subfamily. In terms of assembly, interacts with CtaB. It depends on heme b as a cofactor.

The protein localises to the cell membrane. It catalyses the reaction Fe(II)-heme o + 2 A + H2O = Fe(II)-heme a + 2 AH2. It participates in porphyrin-containing compound metabolism; heme A biosynthesis; heme A from heme O: step 1/1. In terms of biological role, catalyzes the conversion of heme O to heme A by two successive hydroxylations of the methyl group at C8. The first hydroxylation forms heme I, the second hydroxylation results in an unstable dihydroxymethyl group, which spontaneously dehydrates, resulting in the formyl group of heme A. The chain is Heme A synthase from Listeria monocytogenes serotype 4b (strain F2365).